A 120-amino-acid polypeptide reads, in one-letter code: Fumarate reductase subunit D (120 aa).

The next 3 membrane-spanning stretches (helical) occupy residues 25–45, 57–77, and 100–120; these read FAML…LGIL, GFVT…LPMW, and IACY…VFMI.

This sequence belongs to the FrdD family. As to quaternary structure, part of an enzyme complex containing four subunits: a flavoprotein (FrdA), an iron-sulfur protein (FrdB), and two hydrophobic anchor proteins (FrdC and FrdD).

The protein localises to the cell inner membrane. Functionally, anchors the catalytic components of the fumarate reductase complex to the cell membrane, binds quinones. This is Fumarate reductase subunit D from Photobacterium profundum (strain SS9).